The chain runs to 2073 residues: Dedicator of cytokinesis protein 11 (2073 aa).

Position 12 is a phosphoserine (Ser12). Thr16 bears the Phosphothreonine mark. Residues Ser23 and Ser161 each carry the phosphoserine modification. The PH domain occupies 165 to 272; sequence GVIKQGWLHK…WLITLKKIIQ (108 aa). At Tyr248 the chain carries Phosphotyrosine. A phosphoserine mark is found at Ser306, Ser440, and Ser445. The C2 DOCK-type domain occupies 640 to 818; it reads KNHLYVYPLQ…PLLKIKSHLE (179 aa). The disordered stretch occupies residues 1226–1267; the sequence is FQNGHGIKREDSRGSLIPEGATGFPDQGNTGENTRQSSTRSS. Phosphoserine occurs at positions 1237 and 1240. One can recognise a DOCKER domain in the interval 1609–2036; the sequence is KSYASTPELR…LSDIIHEQIL (428 aa).

This sequence belongs to the DOCK family. As to quaternary structure, interacts with CDC42.

Guanine nucleotide-exchange factor (GEF) that activates CDC42 by exchanging bound GDP for free GTP. Required for marginal zone (MZ) B-cell development, is associated with early bone marrow B-cell development, MZ B-cell formation, MZ B-cell number and marginal metallophilic macrophages morphology. Facilitates filopodia formation through the activation of CDC42. This chain is Dedicator of cytokinesis protein 11, found in Homo sapiens (Human).